A 36-amino-acid chain; its full sequence is Pancreatic polypeptide (36 aa).

A Tyrosine amide modification is found at tyrosine 36.

This sequence belongs to the NPY family.

The protein resides in the secreted. Hormone secreted by pancreatic cells that acts as a regulator of pancreatic and gastrointestinal functions. This chain is Pancreatic polypeptide (PPY), found in Larus argentatus (Herring gull).